We begin with the raw amino-acid sequence, 128 residues long: Large ribosomal subunit protein mL52 (128 aa).

Residues 1–28 (MLQIAKLCLATSGRITAQRYVAVTTARA) constitute a mitochondrion transit peptide.

The protein belongs to the mitochondrion-specific ribosomal protein mL52 family. In terms of assembly, component of the mitochondrial ribosome large subunit (39S) which comprises a 16S rRNA and about 50 distinct proteins.

The protein resides in the mitochondrion. This chain is Large ribosomal subunit protein mL52 (mRpL52), found in Drosophila pseudoobscura pseudoobscura (Fruit fly).